Reading from the N-terminus, the 386-residue chain is Cytochrome b (386 aa).

4 helical membrane passes run 32 to 52 (LGSLLGLCLVIQIASGIFLAM), 76 to 98 (YLIRYIHANGASFFFVCMYAHIG), 113 to 133 (VWVIGVVIFIITMATAFLGYC), and 179 to 199 (FFALHYLCPFILAALVIMHLM). Positions 82 and 96 each coordinate heme b. Heme b is bound by residues His183 and His197. A ubiquinone is bound at residue His202. 4 consecutive transmembrane segments (helical) span residues 225-245 (FVFKDLVTVFVFLLIFSLFVF), 289-309 (LGGVIAMFAAILILLVLPVTD), 321-341 (ISKTFFFLFLYNFILLGQLGQ), and 348-368 (FIQLGQFATLNYFLYFIFIVP).

The protein belongs to the cytochrome b family. Fungal cytochrome b-c1 complex contains 10 subunits; 3 respiratory subunits, 2 core proteins and 5 low-molecular weight proteins. Cytochrome b-c1 complex is a homodimer. Heme b serves as cofactor.

The protein localises to the mitochondrion inner membrane. Component of the ubiquinol-cytochrome c reductase complex (complex III or cytochrome b-c1 complex) that is part of the mitochondrial respiratory chain. The b-c1 complex mediates electron transfer from ubiquinol to cytochrome c. Contributes to the generation of a proton gradient across the mitochondrial membrane that is then used for ATP synthesis. This chain is Cytochrome b (COB), found in Wickerhamomyces canadensis (Yeast).